The primary structure comprises 304 residues: Large ribosomal subunit protein uL18 (304 aa).

The segment at 285 to 304 (LNALNSSAGADDDDEEEDDE) is disordered. Acidic residues predominate over residues 294-304 (ADDDDEEEDDE).

It belongs to the universal ribosomal protein uL18 family. As to quaternary structure, component of the large ribosomal subunit (LSU).

The protein resides in the cytoplasm. The protein localises to the nucleus. Its function is as follows. Component of the ribosome, a large ribonucleoprotein complex responsible for the synthesis of proteins in the cell. The small ribosomal subunit (SSU) binds messenger RNAs (mRNAs) and translates the encoded message by selecting cognate aminoacyl-transfer RNA (tRNA) molecules. The large subunit (LSU) contains the ribosomal catalytic site termed the peptidyl transferase center (PTC), which catalyzes the formation of peptide bonds, thereby polymerizing the amino acids delivered by tRNAs into a polypeptide chain. The nascent polypeptides leave the ribosome through a tunnel in the LSU and interact with protein factors that function in enzymatic processing, targeting, and the membrane insertion of nascent chains at the exit of the ribosomal tunnel. This Oryza sativa subsp. indica (Rice) protein is Large ribosomal subunit protein uL18 (RPL5A).